Reading from the N-terminus, the 596-residue chain is Malto-oligosyltrehalose trehalohydrolase (596 aa).

263 to 268 (RLDAVH) is a binding site for substrate. The Nucleophile role is filled by Asp-265. The active-site Proton donor is Glu-302. Residues 327–331 (DDFHH) and 397–402 (HDQIGN) contribute to the substrate site.

Belongs to the glycosyl hydrolase 13 family.

It localises to the cytoplasm. The catalysed reaction is hydrolysis of (1-&gt;4)-alpha-D-glucosidic linkage in 4-alpha-D-[(1-&gt;4)-alpha-D-glucanosyl]n trehalose to yield trehalose and (1-&gt;4)-alpha-D-glucan.. Its pathway is glycan biosynthesis; trehalose biosynthesis. In Rhizobium sp. (strain M-11), this protein is Malto-oligosyltrehalose trehalohydrolase (treZ).